The following is a 260-amino-acid chain: Ribosomal RNA small subunit methyltransferase G (260 aa).

Residues glycine 94, phenylalanine 99, 117–119 (DSS), 145–146 (AE), and arginine 164 contribute to the S-adenosyl-L-methionine site.

The protein belongs to the methyltransferase superfamily. RNA methyltransferase RsmG family.

Its subcellular location is the cytoplasm. In terms of biological role, specifically methylates the N7 position of a guanine in 16S rRNA. This chain is Ribosomal RNA small subunit methyltransferase G, found in Synechococcus sp. (strain JA-3-3Ab) (Cyanobacteria bacterium Yellowstone A-Prime).